Reading from the N-terminus, the 313-residue chain is Putative S-adenosyl-L-methionine-dependent methyltransferase MAV_5149 (313 aa).

Residues aspartate 135 and 164-165 contribute to the S-adenosyl-L-methionine site; that span reads DL.

Belongs to the UPF0677 family.

Exhibits S-adenosyl-L-methionine-dependent methyltransferase activity. The protein is Putative S-adenosyl-L-methionine-dependent methyltransferase MAV_5149 of Mycobacterium avium (strain 104).